The sequence spans 116 residues: RNA guanine-N7 methyltransferase activating subunit (116 aa).

Residues 1–55 (MAEALGAQELYEKMFEQRFTANDKEYQEYLKREQDQPPIVEDWKMGNQRNTDRYR) are interaction with RNMT. The disordered stretch occupies residues 31 to 116 (KREQDQPPIV…SNQRFHSDRY (86 aa)). Positions 36–42 (QPPIVED) match the RNMT-activating domain motif. Residues 56-116 (DNRHHRGWDG…SNQRFHSDRY (61 aa)) are RNA-binding. Over residues 67–78 (QNWSSNSYNQSY) the composition is skewed to low complexity. A compositionally biased stretch (polar residues) spans 97–110 (YQQGHYTHNPSNQR).

It belongs to the RAM family.

It is found in the nucleus. Functionally, regulatory subunit of the mRNA-capping methyltransferase RNMT:RAMAC complex that methylates the N7 position of the added guanosine to the 5'-cap structure of mRNAs. Promotes the recruitment of the methyl donor, S-adenosyl-L-methionine, to RNMT. Regulates RNMT expression by a post-transcriptional stabilizing mechanism. Binds RNA. This chain is RNA guanine-N7 methyltransferase activating subunit (ramac), found in Xenopus tropicalis (Western clawed frog).